The sequence spans 1484 residues: Ral GTPase-activating protein subunit beta (1484 aa).

2 disordered regions span residues 355–437 (PRSD…APRR) and 697–728 (GGEN…PDSE). At serine 359 the chain carries Phosphoserine. Phosphothreonine occurs at positions 363 and 379. Polar residues-rich tracts occupy residues 369–381 (SMPQ…TTPP), 392–428 (NKAT…TSSE), and 701–725 (NLKS…PTTP). Residues serine 421 and serine 710 each carry the phosphoserine modification. The residue at position 724 (threonine 724) is a Phosphothreonine. The 245-residue stretch at 1138-1382 (IGYLDLLPCR…TTLEKEVPVI (245 aa)) folds into the Rap-GAP domain. Residue serine 1275 is modified to Phosphoserine. Residues 1301–1325 (DSLNSSQRLSPSSRMKKLPQGRPVP) are disordered. Over residues 1302 to 1313 (SLNSSQRLSPSS) the composition is skewed to low complexity.

As to quaternary structure, component of the heterodimeric RalGAP1 complex with RALGAPA1 and of the heterodimeric RalGAP2 complex with RALGAPA2. Heterodimerization is required for activity. In terms of tissue distribution, detected in brain, thymus, lung, heart, spleen, liver and testis (at protein level).

In terms of biological role, non-catalytic subunit of the heterodimeric RalGAP1 and RalGAP2 complexes which act as GTPase activators for the Ras-like small GTPases RALA and RALB. The sequence is that of Ral GTPase-activating protein subunit beta from Rattus norvegicus (Rat).